A 248-amino-acid chain; its full sequence is PF03932 family protein CutC (248 aa).

It belongs to the CutC family.

Its subcellular location is the cytoplasm. In Citrobacter koseri (strain ATCC BAA-895 / CDC 4225-83 / SGSC4696), this protein is PF03932 family protein CutC.